The sequence spans 147 residues: UPF0460 protein in nifX-nifW intergenic region (147 aa).

The protein belongs to the UPF0460 family.

In Frankia alni, this protein is UPF0460 protein in nifX-nifW intergenic region.